A 185-amino-acid polypeptide reads, in one-letter code: PXMP2/4 family protein 4 (185 aa).

Transmembrane regions (helical) follow at residues methionine 63 to aspartate 83, isoleucine 100 to leucine 120, and valine 141 to isoleucine 161.

It belongs to the peroxisomal membrane protein PXMP2/4 family.

The protein resides in the membrane. This Dictyostelium discoideum (Social amoeba) protein is PXMP2/4 family protein 4.